We begin with the raw amino-acid sequence, 636 residues long: Biosynthetic arginine decarboxylase (636 aa).

Residue Lys-110 is modified to N6-(pyridoxal phosphate)lysine. Residue 290–300 (IDVGGGLGVDY) coordinates substrate.

The protein belongs to the Orn/Lys/Arg decarboxylase class-II family. SpeA subfamily. Mg(2+) serves as cofactor. The cofactor is pyridoxal 5'-phosphate.

It carries out the reaction L-arginine + H(+) = agmatine + CO2. Its function is as follows. Catalyzes the biosynthesis of agmatine from arginine. The protein is Biosynthetic arginine decarboxylase of Pseudomonas aeruginosa (strain ATCC 15692 / DSM 22644 / CIP 104116 / JCM 14847 / LMG 12228 / 1C / PRS 101 / PAO1).